Reading from the N-terminus, the 160-residue chain is Cytochrome b6-f complex subunit 4 (160 aa).

3 consecutive transmembrane segments (helical) span residues 36-56 (LLYI…GLAV), 95-115 (LLGI…PFIE), and 128-148 (VAMT…IGAA).

This sequence belongs to the cytochrome b family. PetD subfamily. As to quaternary structure, the 4 large subunits of the cytochrome b6-f complex are cytochrome b6, subunit IV (17 kDa polypeptide, PetD), cytochrome f and the Rieske protein, while the 4 small subunits are PetG, PetL, PetM and PetN. The complex functions as a dimer.

Its subcellular location is the cellular thylakoid membrane. Component of the cytochrome b6-f complex, which mediates electron transfer between photosystem II (PSII) and photosystem I (PSI), cyclic electron flow around PSI, and state transitions. The protein is Cytochrome b6-f complex subunit 4 of Synechococcus sp. (strain CC9902).